The sequence spans 134 residues: Profilin-3 (134 aa).

An intrachain disulfide couples Cys13 to Cys118. The Involved in PIP2 interaction signature appears at 84 to 100; it reads AVIRGKKGSGGITIKKT. Thr114 carries the post-translational modification Phosphothreonine.

It belongs to the profilin family. As to quaternary structure, occurs in many kinds of cells as a complex with monomeric actin in a 1:1 ratio. Phosphorylated by MAP kinases.

The protein localises to the cytoplasm. Its subcellular location is the cytoskeleton. Its function is as follows. Binds to actin and affects the structure of the cytoskeleton. At high concentrations, profilin prevents the polymerization of actin, whereas it enhances it at low concentrations. This chain is Profilin-3, found in Olea europaea (Common olive).